Reading from the N-terminus, the 352-residue chain is WAT1-related protein At1g11450 (352 aa).

A run of 10 helical transmembrane segments spans residues 14-34, 46-66, 83-103, 107-127, 139-159, 187-207, 219-239, 253-273, 283-303, and 308-328; these read WPPMIVMVTSQVAMGSVNALV, IIGAYRMAISSFILVPIAYFL, FISGLLGASLMQFFYLLGLSY, TVACALVSLMPAITFAFALIL, AGMIKVMGTLICISGALFLTF, WLLGCLYLVIGIVLLSLWILF, FSSTCLMSIFAAFQCALLSLY, FVIGVIIYAGVIGQAMSTVAA, VFASAIMPVSLISATLFDFLI, and LYLGSVIGSVGTIIGLYVFLW. 2 EamA domains span residues 27-157 and 192-335; these read MGSV…ALFL and LYLV…KETE.

The protein belongs to the drug/metabolite transporter (DMT) superfamily. Plant drug/metabolite exporter (P-DME) (TC 2.A.7.4) family.

It is found in the membrane. This is WAT1-related protein At1g11450 from Arabidopsis thaliana (Mouse-ear cress).